The chain runs to 734 residues: Photosystem I P700 chlorophyll a apoprotein A2 (734 aa).

The next 8 membrane-spanning stretches (helical) occupy residues 46 to 69, 135 to 158, 175 to 199, 273 to 291, 330 to 353, 369 to 395, 417 to 439, and 517 to 535; these read IFAS…FHVA, LYTG…LHLQ, LNHH…HVAI, IAHH…GHMY, IHFQ…QHMY, AALY…IFFI, AIIS…LYVH, and FLVH…LILV. [4Fe-4S] cluster-binding residues include C559 and C568. The next 2 helical transmembrane spans lie at 575–596 and 643–665; these read AFYL…YWHW and LSVW…MFLI. Chlorophyll a-binding residues include H654, M662, and Y670. Phylloquinone is bound at residue W671. Residues 707–727 traverse the membrane as a helical segment; sequence LVGLAHFSVGYIFTYAAFLIA.

It belongs to the PsaA/PsaB family. The PsaA/B heterodimer binds the P700 chlorophyll special pair and subsequent electron acceptors. PSI consists of a core antenna complex that captures photons, and an electron transfer chain that converts photonic excitation into a charge separation. The eukaryotic PSI reaction center is composed of at least 11 subunits. P700 is a chlorophyll a/chlorophyll a' dimer, A0 is one or more chlorophyll a, A1 is one or both phylloquinones and FX is a shared 4Fe-4S iron-sulfur center. serves as cofactor.

The protein resides in the plastid. Its subcellular location is the chloroplast thylakoid membrane. The catalysed reaction is reduced [plastocyanin] + hnu + oxidized [2Fe-2S]-[ferredoxin] = oxidized [plastocyanin] + reduced [2Fe-2S]-[ferredoxin]. Functionally, psaA and PsaB bind P700, the primary electron donor of photosystem I (PSI), as well as the electron acceptors A0, A1 and FX. PSI is a plastocyanin-ferredoxin oxidoreductase, converting photonic excitation into a charge separation, which transfers an electron from the donor P700 chlorophyll pair to the spectroscopically characterized acceptors A0, A1, FX, FA and FB in turn. Oxidized P700 is reduced on the lumenal side of the thylakoid membrane by plastocyanin. This Phaseolus vulgaris (Kidney bean) protein is Photosystem I P700 chlorophyll a apoprotein A2.